The primary structure comprises 103 residues: Large ribosomal subunit protein uL24 (103 aa).

It belongs to the universal ribosomal protein uL24 family. In terms of assembly, part of the 50S ribosomal subunit.

One of two assembly initiator proteins, it binds directly to the 5'-end of the 23S rRNA, where it nucleates assembly of the 50S subunit. In terms of biological role, one of the proteins that surrounds the polypeptide exit tunnel on the outside of the subunit. The sequence is that of Large ribosomal subunit protein uL24 from Anoxybacillus flavithermus (strain DSM 21510 / WK1).